A 408-amino-acid chain; its full sequence is NADH-quinone oxidoreductase subunit D (408 aa).

The protein belongs to the complex I 49 kDa subunit family. NDH-1 is composed of 14 different subunits. Subunits NuoB, C, D, E, F, and G constitute the peripheral sector of the complex.

Its subcellular location is the cell inner membrane. The catalysed reaction is a quinone + NADH + 5 H(+)(in) = a quinol + NAD(+) + 4 H(+)(out). Functionally, NDH-1 shuttles electrons from NADH, via FMN and iron-sulfur (Fe-S) centers, to quinones in the respiratory chain. The immediate electron acceptor for the enzyme in this species is believed to be ubiquinone. Couples the redox reaction to proton translocation (for every two electrons transferred, four hydrogen ions are translocated across the cytoplasmic membrane), and thus conserves the redox energy in a proton gradient. The chain is NADH-quinone oxidoreductase subunit D from Wolinella succinogenes (strain ATCC 29543 / DSM 1740 / CCUG 13145 / JCM 31913 / LMG 7466 / NCTC 11488 / FDC 602W) (Vibrio succinogenes).